A 280-amino-acid chain; its full sequence is Probable ketoamine kinase lp_1983 (280 aa).

87 to 89 (DWL) contacts ATP. The Proton acceptor role is filled by Asp-189.

This sequence belongs to the fructosamine kinase family.

The catalysed reaction is N(6)-(D-ribulosyl)-L-lysine + ATP = N(6)-(3-O-phospho-D-ribulosyl)-L-lysine + ADP + H(+). The enzyme catalyses N-(D-ribulosyl)-cadaverine + ATP = N-(3-O-phospho-D-ribulosyl)-cadaverine + ADP + H(+). It catalyses the reaction N(6)-(D-erythrulosyl)-L-lysine + ATP = N(6)-(3-O-phospho-D-erythrulosyl)-L-lysine + ADP + H(+). It carries out the reaction N-(D-erythrulosyl)-cadaverine + ATP = N-(3-O-phospho-D-erythrulosyl)-cadaverine + ADP + H(+). The catalysed reaction is N(6)-D-ribulosyl-L-lysyl-[protein] + ATP = N(6)-(3-O-phospho-D-ribulosyl)-L-lysyl-[protein] + ADP + H(+). The enzyme catalyses N(6)-(D-erythrulosyl)-L-lysyl-[protein] + ATP = N(6)-(3-O-phospho-D-erythrulosyl)-L-lysyl-[protein] + ADP + H(+). In terms of biological role, ketoamine kinase that phosphorylates ketoamines, such as erythruloselysine, erythrulosecadaverine, ribuloselysine and ribulosecadaverine, on the third carbon of the sugar moiety to generate ketoamine 3-phosphate. Has higher activity on free lysine (erythruloselysine and ribuloselysine), than on ribuloselysine and erythruloselysine residues on glycated proteins. This Lactiplantibacillus plantarum (strain ATCC BAA-793 / NCIMB 8826 / WCFS1) (Lactobacillus plantarum) protein is Probable ketoamine kinase lp_1983.